Consider the following 186-residue polypeptide: MKIAQELRAGNVVMIGKDPMVVQKAEFSKSGRNASVVKMKLKNLLTGAGMESVYRADDKFDTVTLDRKECTYSYFADPLYVFMDSDYNQYEVEGDNLGDALNYLDDGMPVEVVFYEGKAISVEMPTTVIREVEYTEPAVRGDTSGKVMKPARIKPTGFELPVAAFVEIGDMIEIDTRTNEFKRRAN.

This sequence belongs to the elongation factor P family.

It localises to the cytoplasm. Its pathway is protein biosynthesis; polypeptide chain elongation. Involved in peptide bond synthesis. Stimulates efficient translation and peptide-bond synthesis on native or reconstituted 70S ribosomes in vitro. Probably functions indirectly by altering the affinity of the ribosome for aminoacyl-tRNA, thus increasing their reactivity as acceptors for peptidyl transferase. In Thiobacillus denitrificans (strain ATCC 25259 / T1), this protein is Elongation factor P.